The following is a 156-amino-acid chain: Small ribosomal subunit protein uS7 (156 aa).

Belongs to the universal ribosomal protein uS7 family. Part of the 30S ribosomal subunit. Contacts proteins S9 and S11.

Functionally, one of the primary rRNA binding proteins, it binds directly to 16S rRNA where it nucleates assembly of the head domain of the 30S subunit. Is located at the subunit interface close to the decoding center, probably blocks exit of the E-site tRNA. The protein is Small ribosomal subunit protein uS7 of Lactobacillus helveticus (strain DPC 4571).